A 278-amino-acid polypeptide reads, in one-letter code: Dermonecrotic toxin LlSicTox-alphaIII3ii (278 aa).

His-5 is a catalytic residue. Residues Glu-25 and Asp-27 each contribute to the Mg(2+) site. The active-site Nucleophile is His-40. Cys-44 and Cys-50 are oxidised to a cystine. Asp-84 contacts Mg(2+).

The protein belongs to the arthropod phospholipase D family. Class I subfamily. The cofactor is Mg(2+). Expressed by the venom gland.

The protein localises to the secreted. The enzyme catalyses an N-(acyl)-sphingosylphosphocholine = an N-(acyl)-sphingosyl-1,3-cyclic phosphate + choline. It catalyses the reaction an N-(acyl)-sphingosylphosphoethanolamine = an N-(acyl)-sphingosyl-1,3-cyclic phosphate + ethanolamine. The catalysed reaction is a 1-acyl-sn-glycero-3-phosphocholine = a 1-acyl-sn-glycero-2,3-cyclic phosphate + choline. It carries out the reaction a 1-acyl-sn-glycero-3-phosphoethanolamine = a 1-acyl-sn-glycero-2,3-cyclic phosphate + ethanolamine. Functionally, dermonecrotic toxins cleave the phosphodiester linkage between the phosphate and headgroup of certain phospholipids (sphingolipid and lysolipid substrates), forming an alcohol (often choline) and a cyclic phosphate. This toxin acts on sphingomyelin (SM). It may also act on ceramide phosphoethanolamine (CPE), lysophosphatidylcholine (LPC) and lysophosphatidylethanolamine (LPE), but not on lysophosphatidylserine (LPS), and lysophosphatidylglycerol (LPG). It acts by transphosphatidylation, releasing exclusively cyclic phosphate products as second products. Induces dermonecrosis, hemolysis, increased vascular permeability, edema, inflammatory response, and platelet aggregation. This chain is Dermonecrotic toxin LlSicTox-alphaIII3ii, found in Loxosceles laeta (South American recluse spider).